Here is a 90-residue protein sequence, read N- to C-terminus: Molybdopterin synthase sulfur carrier subunit (90 aa).

Gly-90 carries the post-translational modification 1-thioglycine; alternate. Position 90 is a glycyl adenylate; alternate (Gly-90).

Belongs to the MoaD family. MOCS2A subfamily. As to quaternary structure, heterotetramer; composed of 2 small (Mocs2A) and 2 large (Mocs2B) subunits. Post-translationally, C-terminal thiocarboxylation occurs in 2 steps, it is first acyl-adenylated (-COAMP) via the hesA/moeB/thiF part of MOCS3, then thiocarboxylated (-COSH) via the rhodanese domain of MOCS3.

Its subcellular location is the cytoplasm. The protein operates within cofactor biosynthesis; molybdopterin biosynthesis. In terms of biological role, acts as a sulfur carrier required for molybdopterin biosynthesis. Component of the molybdopterin synthase complex that catalyzes the conversion of precursor Z into molybdopterin by mediating the incorporation of 2 sulfur atoms into precursor Z to generate a dithiolene group. In the complex, serves as sulfur donor by being thiocarboxylated (-COSH) at its C-terminus by MOCS3. After interaction with Mocs2B, the sulfur is then transferred to precursor Z to form molybdopterin. This Drosophila erecta (Fruit fly) protein is Molybdopterin synthase sulfur carrier subunit.